The primary structure comprises 103 residues: Endoribonuclease MazF3 (103 aa).

This sequence belongs to the PemK/MazF family. In terms of assembly, forms a complex with cognate antitoxin MazE3.

In terms of biological role, toxic component of a type II toxin-antitoxin (TA) system. Acts as an endoribonuclease, cleaving in U-rich regions. Neutralized by cognate antitoxin MazE3. The polypeptide is Endoribonuclease MazF3 (mazF3) (Mycobacterium tuberculosis (strain CDC 1551 / Oshkosh)).